A 407-amino-acid polypeptide reads, in one-letter code: POC1 centriolar protein homolog A (407 aa).

WD repeat units follow at residues 17–56, 59–98, 101–140, 143–182, 185–224, 227–266, and 269–308; these read GHRD…RAYR, GHKD…ESTV, AHTA…FLFS, QHIN…CVHS, EHGG…LLQH, LHSA…LLYT, and GHQG…VDYG. Positions 317–357 are disordered; it reads PATRASSSGTLPEVDPLVPPGRGRSQESMQSHSQEPVSVPQ. Over residues 342-357 the composition is skewed to polar residues; sequence QESMQSHSQEPVSVPQ. Residues 369–397 are a coiled coil; the sequence is QLDVLTQTVSILEQRLTLTEDKLKQCLEN.

It belongs to the WD repeat POC1 family. In terms of assembly, interacts with POC1B.

Its subcellular location is the cytoplasm. It is found in the cytoskeleton. It localises to the microtubule organizing center. The protein localises to the centrosome. The protein resides in the centriole. Its subcellular location is the cilium basal body. It is found in the spindle pole. In terms of biological role, plays an important role in centriole assembly and/or stability and ciliogenesis. Involved in early steps of centriole duplication, as well as in the later steps of centriole length control. Acts in concert with POC1B to ensure centriole integrity and proper mitotic spindle formation. The protein is POC1 centriolar protein homolog A (POC1A) of Bos taurus (Bovine).